The chain runs to 362 residues: Adenosine deaminase (362 aa).

Zn(2+)-binding residues include H19 and H21. Residues H21, D23, and G181 each coordinate substrate. Residue H208 coordinates Zn(2+). E211 acts as the Proton donor in catalysis. Residue D300 participates in Zn(2+) binding.

It belongs to the metallo-dependent hydrolases superfamily. Adenosine and AMP deaminases family. Adenosine deaminase subfamily. Zn(2+) is required as a cofactor.

It carries out the reaction adenosine + H2O + H(+) = inosine + NH4(+). It catalyses the reaction 2'-deoxyadenosine + H2O + H(+) = 2'-deoxyinosine + NH4(+). Functionally, catalyzes the hydrolytic deamination of adenosine and 2-deoxyadenosine. The protein is Adenosine deaminase of Mycobacterium marinum (strain ATCC BAA-535 / M).